The following is a 219-amino-acid chain: uncharacterized protein (219 aa).

The next 2 membrane-spanning stretches (helical) occupy residues 8–28 (MILF…TLSV) and 194–214 (GIPG…GLLF).

The protein resides in the cell membrane. This is an uncharacterized protein from Archaeoglobus fulgidus (strain ATCC 49558 / DSM 4304 / JCM 9628 / NBRC 100126 / VC-16).